Consider the following 432-residue polypeptide: Trigger factor (432 aa).

A PPIase FKBP-type domain is found at 161–246 (GTRATINFVG…VVKVEARELP (86 aa)).

The protein belongs to the FKBP-type PPIase family. Tig subfamily.

It is found in the cytoplasm. The enzyme catalyses [protein]-peptidylproline (omega=180) = [protein]-peptidylproline (omega=0). Functionally, involved in protein export. Acts as a chaperone by maintaining the newly synthesized protein in an open conformation. Functions as a peptidyl-prolyl cis-trans isomerase. In Aliivibrio fischeri (strain MJ11) (Vibrio fischeri), this protein is Trigger factor.